Reading from the N-terminus, the 296-residue chain is Elongation factor Ts (296 aa).

The involved in Mg(2+) ion dislocation from EF-Tu stretch occupies residues 82–85 (TDFV).

This sequence belongs to the EF-Ts family.

The protein localises to the cytoplasm. Its function is as follows. Associates with the EF-Tu.GDP complex and induces the exchange of GDP to GTP. It remains bound to the aminoacyl-tRNA.EF-Tu.GTP complex up to the GTP hydrolysis stage on the ribosome. In Aromatoleum aromaticum (strain DSM 19018 / LMG 30748 / EbN1) (Azoarcus sp. (strain EbN1)), this protein is Elongation factor Ts.